A 774-amino-acid polypeptide reads, in one-letter code: Probable E3 ubiquitin-protein ligase HECTD2 (774 aa).

The interval 1–51 (MSEAARDLSPGAPPAVAAAAPEERKGKEPEREKLPPIVTAGAAAGLDRGSK) is disordered. The residue at position 9 (serine 9) is a Phosphoserine. Basic and acidic residues predominate over residues 21 to 34 (PEERKGKEPEREKL). The region spanning 435–774 (KRADLKKKLK…ISNSEGFGLE (340 aa)) is the HECT domain. Cysteine 742 (glycyl thioester intermediate) is an active-site residue.

It catalyses the reaction S-ubiquitinyl-[E2 ubiquitin-conjugating enzyme]-L-cysteine + [acceptor protein]-L-lysine = [E2 ubiquitin-conjugating enzyme]-L-cysteine + N(6)-ubiquitinyl-[acceptor protein]-L-lysine.. It functions in the pathway protein modification; protein ubiquitination. Its function is as follows. E3 ubiquitin-protein ligase which accepts ubiquitin from an E2 ubiquitin-conjugating enzyme in the form of a thioester and then directly transfers the ubiquitin to targeted substrates. This is Probable E3 ubiquitin-protein ligase HECTD2 (Hectd2) from Mus musculus (Mouse).